We begin with the raw amino-acid sequence, 84 residues long: MKLTCMVIVAVLFLTAWTSVMADGSINRPDIAEGWQKFFSKARDEMKNRAASELNKRCAGIGSFCGLPGLVDCCSGRCFIVCLP.

The first 22 residues, 1 to 22, serve as a signal peptide directing secretion; that stretch reads MKLTCMVIVAVLFLTAWTSVMA. Residues 23-57 constitute a propeptide that is removed on maturation; it reads DGSINRPDIAEGWQKFFSKARDEMKNRAASELNKR. 3 disulfides stabilise this stretch: C58–C74, C65–C78, and C73–C82.

It belongs to the conotoxin O1 superfamily. Expressed by the venom duct.

It localises to the secreted. Functionally, this toxin activates voltage-gated sodium channels. It shifts the voltage-dependence of activation to more hyperpolarized potentials but has only little effect on channel inactivation. It is active on Nav1.3/SCN3A (EC(50)=3.98 nM), Nav1.4/SCN4A (EC(50)=4.99 nM), Nav1.6/SCN8A (EC(50)=1.27 nM) and Nav1.7/SCN9A (EC(50)=2.42 nM) voltage-gated sodium channels. In vivo, it induces nocifensive or pain-like behaviors in mice when injected intraplantarly. This chain is Delta-conotoxin-like Bt6.4, found in Conus betulinus (Beech cone).